The following is a 464-amino-acid chain: 3-isopropylmalate dehydratase large subunit (464 aa).

The [4Fe-4S] cluster site is built by Cys337, Cys397, and Cys400.

Belongs to the aconitase/IPM isomerase family. LeuC type 1 subfamily. In terms of assembly, heterodimer of LeuC and LeuD. It depends on [4Fe-4S] cluster as a cofactor.

It carries out the reaction (2R,3S)-3-isopropylmalate = (2S)-2-isopropylmalate. Its pathway is amino-acid biosynthesis; L-leucine biosynthesis; L-leucine from 3-methyl-2-oxobutanoate: step 2/4. Its function is as follows. Catalyzes the isomerization between 2-isopropylmalate and 3-isopropylmalate, via the formation of 2-isopropylmaleate. In Bacillus cereus (strain ATCC 10987 / NRS 248), this protein is 3-isopropylmalate dehydratase large subunit.